The following is a 397-amino-acid chain: Elongation factor Tu (397 aa).

One can recognise a tr-type G domain in the interval 10-207; that stretch reads KPHVNVGTIG…TLDAYIPEPE (198 aa). The G1 stretch occupies residues 19 to 26; sequence GHVDHGKT. 19 to 26 contacts GTP; the sequence is GHVDHGKT. Position 26 (Thr-26) interacts with Mg(2+). The tract at residues 60-64 is G2; sequence GITIA. Positions 81 to 84 are G3; the sequence is DCPG. GTP-binding positions include 81 to 85 and 136 to 139; these read DCPGH and NKAD. Residues 136 to 139 are G4; the sequence is NKAD. Positions 174 to 176 are G5; sequence SAL.

It belongs to the TRAFAC class translation factor GTPase superfamily. Classic translation factor GTPase family. EF-Tu/EF-1A subfamily. As to quaternary structure, monomer.

It localises to the cytoplasm. The catalysed reaction is GTP + H2O = GDP + phosphate + H(+). Functionally, GTP hydrolase that promotes the GTP-dependent binding of aminoacyl-tRNA to the A-site of ribosomes during protein biosynthesis. In Hahella chejuensis (strain KCTC 2396), this protein is Elongation factor Tu.